Reading from the N-terminus, the 502-residue chain is Lipoprotein LipO (502 aa).

The first 21 residues, 1 to 21 (MKIRMRKKWMALPLAAMMIAG), serve as a signal peptide directing secretion. Cys-22 carries the N-palmitoyl cysteine lipid modification. Residue Cys-22 is the site of S-diacylglycerol cysteine attachment.

The protein localises to the cell membrane. The sequence is that of Lipoprotein LipO (lipO) from Bacillus subtilis (strain 168).